An 89-amino-acid polypeptide reads, in one-letter code: Small ribosomal subunit protein uS15 (89 aa).

The protein belongs to the universal ribosomal protein uS15 family. Part of the 30S ribosomal subunit. Forms a bridge to the 50S subunit in the 70S ribosome, contacting the 23S rRNA.

Functionally, one of the primary rRNA binding proteins, it binds directly to 16S rRNA where it helps nucleate assembly of the platform of the 30S subunit by binding and bridging several RNA helices of the 16S rRNA. Forms an intersubunit bridge (bridge B4) with the 23S rRNA of the 50S subunit in the ribosome. The sequence is that of Small ribosomal subunit protein uS15 from Aliivibrio salmonicida (strain LFI1238) (Vibrio salmonicida (strain LFI1238)).